Reading from the N-terminus, the 156-residue chain is tRNA-specific adenosine deaminase (156 aa).

The region spanning 2 to 120 is the CMP/dCMP-type deaminase domain; sequence TNDIYFMTLA…GSLMNLLQQS (119 aa). His53 contacts Zn(2+). Glu55 functions as the Proton donor in the catalytic mechanism. Residues Cys83 and Cys86 each coordinate Zn(2+).

It belongs to the cytidine and deoxycytidylate deaminase family. As to quaternary structure, homodimer. It depends on Zn(2+) as a cofactor.

The catalysed reaction is adenosine(34) in tRNA + H2O + H(+) = inosine(34) in tRNA + NH4(+). Functionally, catalyzes the deamination of adenosine to inosine at the wobble position 34 of tRNA(Arg2). The polypeptide is tRNA-specific adenosine deaminase (Staphylococcus aureus (strain Mu50 / ATCC 700699)).